The primary structure comprises 281 residues: Pantothenate synthetase (281 aa).

Residue 31–38 (MGALHDGH) participates in ATP binding. His-38 acts as the Proton donor in catalysis. A (R)-pantoate-binding site is contributed by Gln-62. Gln-62 is a binding site for beta-alanine. 148-151 (GQKD) contributes to the ATP binding site. Position 154 (Gln-154) interacts with (R)-pantoate. Residues Val-177 and 185–188 (LSSR) contribute to the ATP site.

The protein belongs to the pantothenate synthetase family. In terms of assembly, homodimer.

The protein resides in the cytoplasm. It carries out the reaction (R)-pantoate + beta-alanine + ATP = (R)-pantothenate + AMP + diphosphate + H(+). Its pathway is cofactor biosynthesis; (R)-pantothenate biosynthesis; (R)-pantothenate from (R)-pantoate and beta-alanine: step 1/1. Catalyzes the condensation of pantoate with beta-alanine in an ATP-dependent reaction via a pantoyl-adenylate intermediate. The protein is Pantothenate synthetase of Dinoroseobacter shibae (strain DSM 16493 / NCIMB 14021 / DFL 12).